Here is a 271-residue protein sequence, read N- to C-terminus: L-aspartate dehydrogenase (271 aa).

Residues Ala-124 and Asn-192 each contribute to the NAD(+) site. His-222 is a catalytic residue.

This sequence belongs to the L-aspartate dehydrogenase family.

It catalyses the reaction L-aspartate + NADP(+) + H2O = oxaloacetate + NH4(+) + NADPH + H(+). It carries out the reaction L-aspartate + NAD(+) + H2O = oxaloacetate + NH4(+) + NADH + H(+). The protein operates within cofactor biosynthesis; NAD(+) biosynthesis; iminoaspartate from L-aspartate (dehydrogenase route): step 1/1. In terms of biological role, specifically catalyzes the NAD or NADP-dependent dehydrogenation of L-aspartate to iminoaspartate. This Methanosarcina mazei (strain ATCC BAA-159 / DSM 3647 / Goe1 / Go1 / JCM 11833 / OCM 88) (Methanosarcina frisia) protein is L-aspartate dehydrogenase.